Here is a 62-residue protein sequence, read N- to C-terminus: Conotoxin Im5.1 (62 aa).

An N-terminal signal peptide occupies residues Met1 to Ser19. The propeptide occupies Thr20 to Asn48. At Trp60 the chain carries Tryptophan amide.

Belongs to the conotoxin T superfamily. Post-translationally, contains 2 disulfide bonds that can be either 'C1-C3, C2-C4' or 'C1-C4, C2-C3', since these disulfide connectivities have been observed for conotoxins with cysteine framework V (for examples, see AC P0DQQ7 and AC P81755). As to expression, expressed by the venom duct.

The protein localises to the secreted. This chain is Conotoxin Im5.1, found in Conus imperialis (Imperial cone).